The sequence spans 288 residues: POU domain class 2-associating factor 2 (288 aa).

The OCA domain maps to 10–32; the sequence is KRVYQGVRVKHTVKDLLAEKRSG. Disordered regions lie at residues 24 to 52 and 247 to 274; these read DLLA…PFVQ and PPKV…VKED. Residues 35–48 show a composition bias toward low complexity; that stretch reads SNSRLNGSVSSSQS.

The protein belongs to the POU2AF family. Interacts with POU2F3 (via the POU domain) in a DNA-dependent manner; this interaction recruits POU2AF2 to chromatin and increases POU2F3 transactivation activity. Expressed in tuft cells of colon mucosa, as well as in small intestine and thymus.

Its subcellular location is the cytoplasm. It localises to the cytosol. The protein resides in the nucleus. Functionally, transcriptional coactivator of POU2F3. This complex drives the development of tuft cells, a rare chemosensory cells that coordinate immune and neural functions within mucosal epithelial tissues. This is POU domain class 2-associating factor 2 from Homo sapiens (Human).